The sequence spans 735 residues: Photosystem I P700 chlorophyll a apoprotein A2 (735 aa).

8 consecutive transmembrane segments (helical) span residues 47-70 (IFASHFGQLAIIFLWTSGNLFHVA), 136-159 (LYVGSVFLALVSAIFLFAGWLHLQ), 176-200 (LNHHLSGLFGVSSLAWTGHLVHVAI), 274-292 (MAHHHLAIAVLFIVAGHMY), 331-354 (LHFQLGLALASVGTICSLVAQHMY), 370-396 (AALYTHHQYIAGFIMCGAFAHGAIFWI), 418-440 (AIISHLSWVSLFLGFHTLGLYVH), and 518-536 (FLVHHAIALGLHTTTLILV). The [4Fe-4S] cluster site is built by C560 and C569. Transmembrane regions (helical) follow at residues 576–597 (AFYLAVFWMLNTIGWVTFYWHW) and 644–666 (LSVWAWMFLAGHLVYATGFMFLI). H655, M663, and Y671 together coordinate chlorophyll a. Residue W672 participates in phylloquinone binding. The chain crosses the membrane as a helical span at residues 708–728 (LVGLAHFSVGYVFTYAAFVIA).

It belongs to the PsaA/PsaB family. In terms of assembly, the PsaA/B heterodimer binds the P700 chlorophyll special pair and subsequent electron acceptors. PSI consists of a core antenna complex that captures photons, and an electron transfer chain that converts photonic excitation into a charge separation. The eukaryotic PSI reaction center is composed of at least 11 subunits. Requires P700 is a chlorophyll a/chlorophyll a' dimer, A0 is one or more chlorophyll a, A1 is one or both phylloquinones and FX is a shared 4Fe-4S iron-sulfur center. as cofactor.

Its subcellular location is the plastid. It localises to the chloroplast thylakoid membrane. The enzyme catalyses reduced [plastocyanin] + hnu + oxidized [2Fe-2S]-[ferredoxin] = oxidized [plastocyanin] + reduced [2Fe-2S]-[ferredoxin]. PsaA and PsaB bind P700, the primary electron donor of photosystem I (PSI), as well as the electron acceptors A0, A1 and FX. PSI is a plastocyanin/cytochrome c6-ferredoxin oxidoreductase, converting photonic excitation into a charge separation, which transfers an electron from the donor P700 chlorophyll pair to the spectroscopically characterized acceptors A0, A1, FX, FA and FB in turn. Oxidized P700 is reduced on the lumenal side of the thylakoid membrane by plastocyanin or cytochrome c6. This is Photosystem I P700 chlorophyll a apoprotein A2 from Tetradesmus obliquus (Green alga).